The sequence spans 658 residues: Glycogen debranching enzyme (658 aa).

Asp336 acts as the Nucleophile in catalysis. Glu371 serves as the catalytic Proton donor. Residues 459–484 (EANGEENRDGTNSNYSDNHGKEGLGG) are disordered.

Belongs to the glycosyl hydrolase 13 family.

It carries out the reaction Hydrolysis of (1-&gt;6)-alpha-D-glucosidic linkages to branches with degrees of polymerization of three or four glucose residues in limit dextrin.. It participates in glycan degradation; glycogen degradation. Its function is as follows. Removes maltotriose and maltotetraose chains that are attached by 1,6-alpha-linkage to the limit dextrin main chain, generating a debranched limit dextrin. This is Glycogen debranching enzyme from Salmonella paratyphi B (strain ATCC BAA-1250 / SPB7).